The sequence spans 346 residues: tRNA N6-adenosine threonylcarbamoyltransferase (346 aa).

Residues H117, H121, and Y138 each contribute to the a divalent metal cation site. Substrate-binding positions include 138 to 142 (YVSGG), D170, G185, and N277. D305 serves as a coordination point for a divalent metal cation.

Belongs to the KAE1 / TsaD family. In terms of assembly, component of the EKC/KEOPS complex composed of at least SPAP27G11.07c/BUD32, cgi121, gon7, pgp2 and SPAC4H3.13/PCC1; the whole complex dimerizes. It depends on a divalent metal cation as a cofactor.

It is found in the cytoplasm. It localises to the nucleus. The enzyme catalyses L-threonylcarbamoyladenylate + adenosine(37) in tRNA = N(6)-L-threonylcarbamoyladenosine(37) in tRNA + AMP + H(+). Component of the EKC/KEOPS complex that is required for the formation of a threonylcarbamoyl group on adenosine at position 37 (t(6)A37) in tRNAs that read codons beginning with adenine. The complex is probably involved in the transfer of the threonylcarbamoyl moiety of threonylcarbamoyl-AMP (TC-AMP) to the N6 group of A37. Pgp2 likely plays a direct catalytic role in this reaction, but requires other protein(s) of the complex to fulfill this activity. The EKC/KEOPS complex also promotes both telomere uncapping and telomere elongation. The complex is required for efficient recruitment of transcriptional coactivators. The sequence is that of tRNA N6-adenosine threonylcarbamoyltransferase (pgp2) from Schizosaccharomyces pombe (strain 972 / ATCC 24843) (Fission yeast).